Reading from the N-terminus, the 814-residue chain is Flagellar radial spoke protein 1 (814 aa).

R243 carries the post-translational modification Asymmetric dimethylarginine. The disordered stretch occupies residues 283-346 (VQSISTGNRE…PPPPAPKVDP (64 aa)). Acidic residues predominate over residues 303 to 329 (PEEDEEEEKEEEKEEPEEGEEGEEGEG). R428 bears the Asymmetric dimethylarginine mark. 6 MORN repeats span residues 577-597 (YFGSYADDVKHGPGLYAFATG), 600-622 (YAGEYAGGKRHGRGVMVFPDGGT), 623-645 (YVGEFVADKFEGQGQYRYPDGSV), 646-662 (YTGSWAAGQKHGPGVYW), 671-685 (GEWKKGLLVGKGTYE), and 691-707 (FEGEFVRGMPAGTATYT). Residues 739–769 (GIPPGSGDEPQLDEEGQPIEDTDKPPLPAHP) are disordered. A compositionally biased stretch (acidic residues) spans 748–758 (PQLDEEGQPIE).

Asymmetrically dimethylated at Arg-243 and Arg-428 during flagellum resorption. Probably methylated by PRMT1.

It localises to the cytoplasm. It is found in the cytoskeleton. Its subcellular location is the flagellum axoneme. Functionally, flagellar radial spokes contribute to the regulation of dynein arm activity and thus the pattern of flagellar bending. They consist of a thin stalk, which is attached to the a subfiber of the outer doublet microtubule, and a bulbous head, which is attached to the stalk and appears to interact with the projections from the central pair of microtubules. This chain is Flagellar radial spoke protein 1, found in Chlamydomonas reinhardtii (Chlamydomonas smithii).